A 652-amino-acid polypeptide reads, in one-letter code: tRNA 5-methylaminomethyl-2-thiouridine biosynthesis bifunctional protein MnmC (652 aa).

Positions 1-227 are tRNA (mnm(5)s(2)U34)-methyltransferase; it reads MLSWKNDLTP…KREMLTGKYS (227 aa). The FAD-dependent cmnm(5)s(2)U34 oxidoreductase stretch occupies residues 259 to 652; it reads IGAGIAGSTL…ARFLYRRIRK (394 aa).

It in the N-terminal section; belongs to the methyltransferase superfamily. tRNA (mnm(5)s(2)U34)-methyltransferase family. The protein in the C-terminal section; belongs to the DAO family. FAD is required as a cofactor.

It is found in the cytoplasm. It carries out the reaction 5-aminomethyl-2-thiouridine(34) in tRNA + S-adenosyl-L-methionine = 5-methylaminomethyl-2-thiouridine(34) in tRNA + S-adenosyl-L-homocysteine + H(+). In terms of biological role, catalyzes the last two steps in the biosynthesis of 5-methylaminomethyl-2-thiouridine (mnm(5)s(2)U) at the wobble position (U34) in tRNA. Catalyzes the FAD-dependent demodification of cmnm(5)s(2)U34 to nm(5)s(2)U34, followed by the transfer of a methyl group from S-adenosyl-L-methionine to nm(5)s(2)U34, to form mnm(5)s(2)U34. The sequence is that of tRNA 5-methylaminomethyl-2-thiouridine biosynthesis bifunctional protein MnmC from Leptospira borgpetersenii serovar Hardjo-bovis (strain JB197).